Here is a 140-residue protein sequence, read N- to C-terminus: ATP synthase epsilon chain (140 aa).

This sequence belongs to the ATPase epsilon chain family. F-type ATPases have 2 components, CF(1) - the catalytic core - and CF(0) - the membrane proton channel. CF(1) has five subunits: alpha(3), beta(3), gamma(1), delta(1), epsilon(1). CF(0) has three main subunits: a, b and c.

The protein localises to the cell inner membrane. In terms of biological role, produces ATP from ADP in the presence of a proton gradient across the membrane. The chain is ATP synthase epsilon chain from Neisseria meningitidis serogroup B (strain ATCC BAA-335 / MC58).